We begin with the raw amino-acid sequence, 110 residues long: UPF0122 protein BPUM_1495 (110 aa).

It belongs to the UPF0122 family.

Functionally, might take part in the signal recognition particle (SRP) pathway. This is inferred from the conservation of its genetic proximity to ftsY/ffh. May be a regulatory protein. The polypeptide is UPF0122 protein BPUM_1495 (Bacillus pumilus (strain SAFR-032)).